We begin with the raw amino-acid sequence, 164 residues long: UPF0114 protein YqhA (164 aa).

Transmembrane regions (helical) follow at residues 15 to 35 (LLAP…LKFF), 53 to 73 (LILV…LVMV), and 136 to 156 (LMWY…MGYL).

It belongs to the UPF0114 family.

It is found in the cell membrane. In Escherichia coli O139:H28 (strain E24377A / ETEC), this protein is UPF0114 protein YqhA.